A 432-amino-acid chain; its full sequence is Glutamate-1-semialdehyde 2,1-aminomutase (432 aa).

Lysine 270 carries the N6-(pyridoxal phosphate)lysine modification.

It belongs to the class-III pyridoxal-phosphate-dependent aminotransferase family. HemL subfamily. In terms of assembly, homodimer. Pyridoxal 5'-phosphate is required as a cofactor.

It is found in the cytoplasm. It carries out the reaction (S)-4-amino-5-oxopentanoate = 5-aminolevulinate. It participates in porphyrin-containing compound metabolism; protoporphyrin-IX biosynthesis; 5-aminolevulinate from L-glutamyl-tRNA(Glu): step 2/2. This is Glutamate-1-semialdehyde 2,1-aminomutase from Acinetobacter baumannii (strain ACICU).